Consider the following 512-residue polypeptide: Cytochrome P450 4d1 (512 aa).

Heme is bound by residues Glu-316 and Cys-456.

It belongs to the cytochrome P450 family. Heme is required as a cofactor.

Its subcellular location is the endoplasmic reticulum membrane. The protein resides in the microsome membrane. Functionally, involved in the metabolism of insect hormones and in the breakdown of synthetic insecticides. In Drosophila simulans (Fruit fly), this protein is Cytochrome P450 4d1 (Cyp4d1).